The chain runs to 424 residues: Glutamyl-tRNA reductase (424 aa).

Substrate-binding positions include 49–52, Ser109, 114–116, and Gln120; these read TCNR and EDQ. Cys50 acts as the Nucleophile in catalysis. An NADP(+)-binding site is contributed by 189–194; the sequence is GFGKMS.

Belongs to the glutamyl-tRNA reductase family. Homodimer.

The catalysed reaction is (S)-4-amino-5-oxopentanoate + tRNA(Glu) + NADP(+) = L-glutamyl-tRNA(Glu) + NADPH + H(+). It participates in porphyrin-containing compound metabolism; protoporphyrin-IX biosynthesis; 5-aminolevulinate from L-glutamyl-tRNA(Glu): step 1/2. Catalyzes the NADPH-dependent reduction of glutamyl-tRNA(Glu) to glutamate 1-semialdehyde (GSA). This chain is Glutamyl-tRNA reductase, found in Alkaliphilus metalliredigens (strain QYMF).